A 490-amino-acid chain; its full sequence is B3 domain-containing protein REM14 (490 aa).

DNA-binding regions (TF-B3) lie at residues 3 to 95, 130 to 226, and 236 to 333; these read NQHF…LGPS, CFSA…LPKG, and CFVA…LSNE. The tract at residues 343–367 is disordered; it reads NEVESLSTDQESHEESSHNEKISRR. Residues 352–364 are compositionally biased toward basic and acidic residues; the sequence is QESHEESSHNEKI. Positions 387–484 form a DNA-binding region, TF-B3 4; sequence FVTLNLTPYN…TSCVLKFCSK (98 aa).

The protein localises to the nucleus. This is B3 domain-containing protein REM14 (REM14) from Arabidopsis thaliana (Mouse-ear cress).